A 204-amino-acid polypeptide reads, in one-letter code: Ribosome maturation factor RimP (204 aa).

Belongs to the RimP family.

It localises to the cytoplasm. Its function is as follows. Required for maturation of 30S ribosomal subunits. This chain is Ribosome maturation factor RimP, found in Allorhizobium ampelinum (strain ATCC BAA-846 / DSM 112012 / S4) (Agrobacterium vitis (strain S4)).